We begin with the raw amino-acid sequence, 219 residues long: Ribose-5-phosphate isomerase A (219 aa).

Substrate is bound by residues 28–31 (SGST), 81–84 (DGAD), and 94–97 (KGGG). Glu-103 functions as the Proton acceptor in the catalytic mechanism. Lys-121 is a binding site for substrate.

The protein belongs to the ribose 5-phosphate isomerase family. Homodimer.

The enzyme catalyses aldehydo-D-ribose 5-phosphate = D-ribulose 5-phosphate. The protein operates within carbohydrate degradation; pentose phosphate pathway; D-ribose 5-phosphate from D-ribulose 5-phosphate (non-oxidative stage): step 1/1. Functionally, catalyzes the reversible conversion of ribose-5-phosphate to ribulose 5-phosphate. This Histophilus somni (strain 2336) (Haemophilus somnus) protein is Ribose-5-phosphate isomerase A.